We begin with the raw amino-acid sequence, 374 residues long: Dual-specificity RNA methyltransferase RlmN (374 aa).

Glu91 (proton acceptor) is an active-site residue. The Radical SAM core domain occupies 97–340 (EDDRGTLCVS…TTVRKTRGDD (244 aa)). Cys104 and Cys345 are joined by a disulfide. [4Fe-4S] cluster contacts are provided by Cys111, Cys115, and Cys118. Residues 166–167 (GE), Ser198, 220–222 (SLH), and Asn302 contribute to the S-adenosyl-L-methionine site. Cys345 acts as the S-methylcysteine intermediate in catalysis.

This sequence belongs to the radical SAM superfamily. RlmN family. The cofactor is [4Fe-4S] cluster.

The protein resides in the cytoplasm. The enzyme catalyses adenosine(2503) in 23S rRNA + 2 reduced [2Fe-2S]-[ferredoxin] + 2 S-adenosyl-L-methionine = 2-methyladenosine(2503) in 23S rRNA + 5'-deoxyadenosine + L-methionine + 2 oxidized [2Fe-2S]-[ferredoxin] + S-adenosyl-L-homocysteine. The catalysed reaction is adenosine(37) in tRNA + 2 reduced [2Fe-2S]-[ferredoxin] + 2 S-adenosyl-L-methionine = 2-methyladenosine(37) in tRNA + 5'-deoxyadenosine + L-methionine + 2 oxidized [2Fe-2S]-[ferredoxin] + S-adenosyl-L-homocysteine. Functionally, specifically methylates position 2 of adenine 2503 in 23S rRNA and position 2 of adenine 37 in tRNAs. m2A2503 modification seems to play a crucial role in the proofreading step occurring at the peptidyl transferase center and thus would serve to optimize ribosomal fidelity. The chain is Dual-specificity RNA methyltransferase RlmN from Delftia acidovorans (strain DSM 14801 / SPH-1).